Reading from the N-terminus, the 1345-residue chain is Rho guanine nucleotide exchange factor 10 (1345 aa).

Disordered stretches follow at residues 1–84 (MEQG…PAKL) and 99–120 (TPLQEDQPSSPDANTEEEGVGL). The segment covering 22 to 39 (NNEEEGELFDFDSGDEVP) has biased composition (acidic residues). A compositionally biased stretch (basic and acidic residues) spans 40–54 (EADRQVPSADDRTRG). Residues 102 to 111 (QEDQPSSPDA) show a composition bias toward polar residues. The residue at position 157 (Ser157) is a Phosphoserine. Disordered regions lie at residues 158–195 (VEEEEAAETVGDGQCNSLSSEDLPHSSEQGSQEGSALA) and 207–273 (MENP…IPRS). Polar residues predominate over residues 171–191 (QCNSLSSEDLPHSSEQGSQEG). A compositionally biased stretch (acidic residues) spans 224 to 239 (DSEPDEMIYDDVENGE). Positions 242 to 255 (GNSSPEYGWSSSEF) are enriched in low complexity. A coiled-coil region spans residues 307-335 (GAMEIQQAKQRQERKMQKLMKAAKEGTKD). The residue at position 355 (Ser355) is a Phosphoserine. Residues 397–584 (VRRYILGSIV…ETLAEKLNER (188 aa)) form the DH domain. Disordered regions lie at residues 1202-1237 (DRARDSPRSGSELQDEDPKDLLCSEEGPSCPGQPDT) and 1253-1306 (KNDL…RASS). The span at 1256-1271 (LSSSSGSLNLSHGSSS) shows a compositional bias: low complexity. A Phosphoserine modification is found at Ser1262. N5-methylglutamine is present on Gln1314.

Methylated at Gln-1314 by N6AMT1. Ubiquitously expressed.

May play a role in developmental myelination of peripheral nerves. The chain is Rho guanine nucleotide exchange factor 10 (Arhgef10) from Mus musculus (Mouse).